A 424-amino-acid chain; its full sequence is Enolase (424 aa).

Q165 is a binding site for (2R)-2-phosphoglycerate. Residue E207 is the Proton donor of the active site. Residues D244, E283, and D310 each contribute to the Mg(2+) site. K335, R364, S365, and K386 together coordinate (2R)-2-phosphoglycerate. K335 functions as the Proton acceptor in the catalytic mechanism.

It belongs to the enolase family. The cofactor is Mg(2+).

The protein localises to the cytoplasm. It is found in the secreted. It localises to the cell surface. It catalyses the reaction (2R)-2-phosphoglycerate = phosphoenolpyruvate + H2O. It participates in carbohydrate degradation; glycolysis; pyruvate from D-glyceraldehyde 3-phosphate: step 4/5. In terms of biological role, catalyzes the reversible conversion of 2-phosphoglycerate (2-PG) into phosphoenolpyruvate (PEP). It is essential for the degradation of carbohydrates via glycolysis. This is Enolase from Chlamydia felis (strain Fe/C-56) (Chlamydophila felis).